The sequence spans 353 residues: uncharacterized protein (353 aa).

The signal sequence occupies residues 1–30; the sequence is MHLRHLFSSRLRGSLLLGSLLVVSSFSTQA.

In terms of assembly, monomer.

This is an uncharacterized protein from Escherichia coli (strain K12).